Reading from the N-terminus, the 693-residue chain is Phosphoribosylformylglycinamidine synthase subunit PurL (693 aa).

Residue His34 is part of the active site. 2 residues coordinate ATP: Tyr37 and Lys76. Residue Glu78 participates in Mg(2+) binding. Substrate-binding positions include 79–82 (SHNH) and Arg101. Catalysis depends on His80, which acts as the Proton acceptor. Asp102 lines the Mg(2+) pocket. Residue Gln222 coordinates substrate. Asp248 is a Mg(2+) binding site. Substrate is bound at residue 292–294 (ETQ). Positions 470 and 507 each coordinate ATP. Substrate is bound at residue Ser510.

Belongs to the FGAMS family. As to quaternary structure, monomer. Part of the FGAM synthase complex composed of 1 PurL, 1 PurQ and 2 PurS subunits.

The protein localises to the cytoplasm. It catalyses the reaction N(2)-formyl-N(1)-(5-phospho-beta-D-ribosyl)glycinamide + L-glutamine + ATP + H2O = 2-formamido-N(1)-(5-O-phospho-beta-D-ribosyl)acetamidine + L-glutamate + ADP + phosphate + H(+). It functions in the pathway purine metabolism; IMP biosynthesis via de novo pathway; 5-amino-1-(5-phospho-D-ribosyl)imidazole from N(2)-formyl-N(1)-(5-phospho-D-ribosyl)glycinamide: step 1/2. Its function is as follows. Part of the phosphoribosylformylglycinamidine synthase complex involved in the purines biosynthetic pathway. Catalyzes the ATP-dependent conversion of formylglycinamide ribonucleotide (FGAR) and glutamine to yield formylglycinamidine ribonucleotide (FGAM) and glutamate. The FGAM synthase complex is composed of three subunits. PurQ produces an ammonia molecule by converting glutamine to glutamate. PurL transfers the ammonia molecule to FGAR to form FGAM in an ATP-dependent manner. PurS interacts with PurQ and PurL and is thought to assist in the transfer of the ammonia molecule from PurQ to PurL. This Pyrobaculum calidifontis (strain DSM 21063 / JCM 11548 / VA1) protein is Phosphoribosylformylglycinamidine synthase subunit PurL.